Here is a 249-residue protein sequence, read N- to C-terminus: Acidic leucine-rich nuclear phosphoprotein 32 family member A (249 aa).

Thr15 carries the phosphothreonine modification. Phosphoserine is present on Ser17. LRR repeat units lie at residues Asp18–Thr38, Glu43–Asn64, Lys65–Cys87, and Asn89–Lys110. The 39-residue stretch at Cys123–Glu161 folds into the LRRCT domain. The segment covering Gly147–Pro156 has biased composition (basic and acidic residues). The interval Gly147–Asp249 is disordered. The tract at residues Arg150–Glu174 is necessary for tumor-suppressive function. The segment covering Asp157–Glu230 has biased composition (acidic residues). Ser158 and Ser204 each carry phosphoserine. Residues Glu165–Asp249 are interaction with E4F1.

It belongs to the ANP32 family. As to quaternary structure, component of the SET complex, composed of at least ANP32A, APEX1, HMGB2, NME1, SET and TREX1. Directly interacts with SET. Interacts with ATXN1/SCA1. Interacts with MAP1B. Interacts with ELAVL1. Part of the INHAT (inhibitor of histone acetyltransferases) complex. Interacts with E4F1. In terms of processing, the N-terminus is blocked. Post-translationally, phosphorylated on serine residues, at least in part by casein kinase 2/CK2. Some glutamate residues are glycylated by TTLL8. This modification occurs exclusively on glutamate residues and results in a glycine chain on the gamma-carboxyl group. As to expression, widely distributed in the central nervous system, with an abundant expression in the cerebellum.

Its subcellular location is the nucleus. It is found in the cytoplasm. The protein resides in the endoplasmic reticulum. Functionally, multifunctional protein that is involved in the regulation of many processes including tumor suppression, apoptosis, cell cycle progression or transcription. Promotes apoptosis by favouring the activation of caspase-9/CASP9 and allowing apoptosome formation. In addition, plays a role in the modulation of histone acetylation and transcription as part of the INHAT (inhibitor of histone acetyltransferases) complex. Inhibits the histone-acetyltranferase activity of EP300/CREBBP (CREB-binding protein) and EP300/CREBBP-associated factor by histone masking. Preferentially binds to unmodified histone H3 and sterically inhibiting its acetylation and phosphorylation leading to cell growth inhibition. Participates in other biochemical processes such as regulation of mRNA nuclear-to-cytoplasmic translocation and stability by its association with ELAVL1 (Hu-antigen R). Plays a role in E4F1-mediated transcriptional repression as well as inhibition of protein phosphatase 2A. This Bos taurus (Bovine) protein is Acidic leucine-rich nuclear phosphoprotein 32 family member A (ANP32A).